The primary structure comprises 608 residues: 1-phosphatidylinositol 4,5-bisphosphate phosphodiesterase zeta-1 (608 aa).

Residues 35–70 (CSYIHVKQIFKDNDRLKQGRITIEEFRAIYRIITHR) enclose the EF-hand domain. The PI-PLC X-box domain occupies 155-299 (QDMTHPLNDY…LKFKILVKNK (145 aa)). Catalysis depends on residues His170 and His215. Residues 305–324 (KETHERKGSDKRGDNQDKET) form a disordered region. The region spanning 349–465 (LSDLVIYTKA…GYILKPHFLR (117 aa)) is the PI-PLC Y-box domain. Residues 465–589 (RESKSYFNPS…KGYRRIPLFS (125 aa)) enclose the C2 domain.

In terms of assembly, interacts via its C2 domain with PtdIns(3)P and, to a lesser extent, PtdIns(5)P in vitro. Ca(2+) is required as a cofactor. As to expression, expressed specifically in testis and sperm. Weakly expressed in pancreatic-duct cells. Up-regulated in pancreatic-duct cells from patients with cystic fibrosis.

The protein resides in the nucleus. It is found in the cytoplasm. Its subcellular location is the perinuclear region. It catalyses the reaction a 1,2-diacyl-sn-glycero-3-phospho-(1D-myo-inositol-4,5-bisphosphate) + H2O = 1D-myo-inositol 1,4,5-trisphosphate + a 1,2-diacyl-sn-glycerol + H(+). The production of the second messenger molecules diacylglycerol (DAG) and inositol 1,4,5-trisphosphate (IP3) is mediated by activated phosphatidylinositol-specific phospholipase C enzymes. In vitro, hydrolyzes PtdIns(4,5)P2 in a Ca(2+)-dependent manner. Triggers intracellular Ca(2+) oscillations in oocytes solely during M phase and is involved in inducing oocyte activation and initiating embryonic development up to the blastocyst stage. Is therefore a strong candidate for the egg-activating soluble sperm factor that is transferred from the sperm into the egg cytoplasm following gamete membrane fusion. May exert an inhibitory effect on phospholipase-C-coupled processes that depend on calcium ions and protein kinase C, including CFTR trafficking and function. In Homo sapiens (Human), this protein is 1-phosphatidylinositol 4,5-bisphosphate phosphodiesterase zeta-1.